A 196-amino-acid polypeptide reads, in one-letter code: MADS-box protein FLOWERING LOCUS C (196 aa).

Residues 1-61 (MGRKKLEIKR…GKLYSFSSGD (61 aa)) form the MADS-box domain. A Nuclear localization signal motif is present at residues 8–15 (IKRIENKS). The K-box domain occupies 80–170 (ALDHQSKALN…ASQMENNHHV (91 aa)).

High expression in the vegetative apex and in root tissue and lower expression in leaves and stems. Not detected in young tissues of the inflorescence. Before fertilization, expressed in ovules, but not in pollen or stamens, of non-vernalized plants. After vernalization, not detected in ovules.

Its subcellular location is the nucleus. Putative transcription factor that seems to play a central role in the regulation of flowering time in the late-flowering phenotype by interacting with 'FRIGIDA', the autonomous and the vernalization flowering pathways. Inhibits flowering by repressing 'SUPPRESSOR OF OVEREXPRESSION OF CONSTANS 1'. At elevated temperatures (e.g. 29 degrees Celsius), maintained at high levels in a JMJ30/JMJ32-dependent manner to prevent extreme precocious flowering. This Arabidopsis thaliana (Mouse-ear cress) protein is MADS-box protein FLOWERING LOCUS C.